We begin with the raw amino-acid sequence, 273 residues long: Nitrogenase iron protein (273 aa).

8-15 lines the ATP pocket; the sequence is GKGGIGKS. C95 lines the [4Fe-4S] cluster pocket. The residue at position 98 (R98) is an ADP-ribosylarginine; by dinitrogenase reductase ADP-ribosyltransferase. Position 130 (C130) interacts with [4Fe-4S] cluster.

This sequence belongs to the NifH/BchL/ChlL family. Homodimer. The cofactor is [4Fe-4S] cluster. Post-translationally, the reversible ADP-ribosylation of Arg-98 inactivates the nitrogenase reductase and regulates nitrogenase activity.

It catalyses the reaction N2 + 8 reduced [2Fe-2S]-[ferredoxin] + 16 ATP + 16 H2O = H2 + 8 oxidized [2Fe-2S]-[ferredoxin] + 2 NH4(+) + 16 ADP + 16 phosphate + 6 H(+). Its function is as follows. The key enzymatic reactions in nitrogen fixation are catalyzed by the nitrogenase complex, which has 2 components: the iron protein and the molybdenum-iron protein. This is Nitrogenase iron protein from Roseiflexus castenholzii (strain DSM 13941 / HLO8).